Reading from the N-terminus, the 548-residue chain is MAAKDVKFGNDARIKMLRGVNILADAVKVTLGPKGRNVVLDKSFGSPTITKDGVSVAREIELEDKFENMGAQMVKEVASKANDAAGDGTTTATVLAQSIITEGLKAVAAGMNPMDLKRGIDKAVIAAVEELKKLSVPCSDSKAIAQVGTISANSDSTVGELIAQAMEKVGKEGVITVEEGSGLQDELDVVEGMQFDRGYLSPYFINKPETGSIELESPFILLADKKISNIREMLPVLEAVAKAGKPLLIIAEDVEGEALATLVVNTMRGIVKVAAVKAPGFGDRRKAMLQDIATLTAGTVISEEIGLELEKTTLEDLGQAKRVVINKDTTIIIDGVGDEAAIQGRVAQIRQQIEDATSDYDKEKLQERVAKLAGGVAVIKVGAATEVEMKEKKARVEDALHATRAAVEEGVVAGGGVALIRAAHAIAGLKGDNEDQNVGIKVALRAMESPLRQIVVNAGEEASVIANKVKAGEGSFGYNAYTEEYGDMIAMGILDPTKVTRSALQYAASIAGLMITTECMVTDLPRDDKGADMGAGGMGGMGGMGGMM.

Residues 30–33 (TLGP), Lys-51, 87–91 (DGTTT), Gly-415, and Asp-495 each bind ATP.

The protein belongs to the chaperonin (HSP60) family. As to quaternary structure, forms a cylinder of 14 subunits composed of two heptameric rings stacked back-to-back. Interacts with the co-chaperonin GroES.

The protein resides in the cytoplasm. The enzyme catalyses ATP + H2O + a folded polypeptide = ADP + phosphate + an unfolded polypeptide.. Its function is as follows. Together with its co-chaperonin GroES, plays an essential role in assisting protein folding. The GroEL-GroES system forms a nano-cage that allows encapsulation of the non-native substrate proteins and provides a physical environment optimized to promote and accelerate protein folding. This Yersinia pseudotuberculosis serotype O:1b (strain IP 31758) protein is Chaperonin GroEL.